Reading from the N-terminus, the 269-residue chain is Formamidopyrimidine-DNA glycosylase (269 aa).

Residue Pro2 is the Schiff-base intermediate with DNA of the active site. The active-site Proton donor is Glu3. Lys58 functions as the Proton donor; for beta-elimination activity in the catalytic mechanism. His91, Arg110, and Lys150 together coordinate DNA. Residues 235 to 269 form an FPG-type zinc finger; sequence SVYGCENKTCHFCKSKIIKIVQNQRSTFYCRKCQT. Catalysis depends on Arg259, which acts as the Proton donor; for delta-elimination activity.

This sequence belongs to the FPG family. Monomer. Zn(2+) is required as a cofactor.

The enzyme catalyses Hydrolysis of DNA containing ring-opened 7-methylguanine residues, releasing 2,6-diamino-4-hydroxy-5-(N-methyl)formamidopyrimidine.. The catalysed reaction is 2'-deoxyribonucleotide-(2'-deoxyribose 5'-phosphate)-2'-deoxyribonucleotide-DNA = a 3'-end 2'-deoxyribonucleotide-(2,3-dehydro-2,3-deoxyribose 5'-phosphate)-DNA + a 5'-end 5'-phospho-2'-deoxyribonucleoside-DNA + H(+). Its function is as follows. Involved in base excision repair of DNA damaged by oxidation or by mutagenic agents. Acts as a DNA glycosylase that recognizes and removes damaged bases. Has a preference for oxidized purines, such as 7,8-dihydro-8-oxoguanine (8-oxoG). Has AP (apurinic/apyrimidinic) lyase activity and introduces nicks in the DNA strand. Cleaves the DNA backbone by beta-delta elimination to generate a single-strand break at the site of the removed base with both 3'- and 5'-phosphates. The polypeptide is Formamidopyrimidine-DNA glycosylase (Ruthia magnifica subsp. Calyptogena magnifica).